The sequence spans 543 residues: CTP synthase (543 aa).

Positions 1–265 (MTNYIFVTGG…DELVVQRFGL (265 aa)) are amidoligase domain. A CTP-binding site is contributed by Ser-13. Ser-13 is a UTP binding site. Residues 14–19 (SLGKGI) and Asp-71 contribute to the ATP site. Asp-71 and Glu-139 together coordinate Mg(2+). Residues 146–148 (DIE), 186–191 (KTKPTQ), and Lys-222 contribute to the CTP site. Residues 186–191 (KTKPTQ) and Lys-222 each bind UTP. 238–240 (KDA) contacts ATP. A Glutamine amidotransferase type-1 domain is found at 290–541 (TIGMVGKYVE…VKAAGEYYKN (252 aa)). An L-glutamine-binding site is contributed by Gly-351. The active-site Nucleophile; for glutamine hydrolysis is Cys-378. L-glutamine-binding positions include 379–382 (LGMQ), Glu-402, and Arg-469. Residues His-514 and Glu-516 contribute to the active site.

This sequence belongs to the CTP synthase family. Homotetramer.

It carries out the reaction UTP + L-glutamine + ATP + H2O = CTP + L-glutamate + ADP + phosphate + 2 H(+). The enzyme catalyses L-glutamine + H2O = L-glutamate + NH4(+). The catalysed reaction is UTP + NH4(+) + ATP = CTP + ADP + phosphate + 2 H(+). It functions in the pathway pyrimidine metabolism; CTP biosynthesis via de novo pathway; CTP from UDP: step 2/2. Allosterically activated by GTP, when glutamine is the substrate; GTP has no effect on the reaction when ammonia is the substrate. The allosteric effector GTP functions by stabilizing the protein conformation that binds the tetrahedral intermediate(s) formed during glutamine hydrolysis. Inhibited by the product CTP, via allosteric rather than competitive inhibition. Catalyzes the ATP-dependent amination of UTP to CTP with either L-glutamine or ammonia as the source of nitrogen. Regulates intracellular CTP levels through interactions with the four ribonucleotide triphosphates. This Pseudoalteromonas atlantica (strain T6c / ATCC BAA-1087) protein is CTP synthase.